A 236-amino-acid polypeptide reads, in one-letter code: 2-C-methyl-D-erythritol 4-phosphate cytidylyltransferase (236 aa).

Belongs to the IspD/TarI cytidylyltransferase family. IspD subfamily. Homodimer.

The enzyme catalyses 2-C-methyl-D-erythritol 4-phosphate + CTP + H(+) = 4-CDP-2-C-methyl-D-erythritol + diphosphate. It participates in isoprenoid biosynthesis; isopentenyl diphosphate biosynthesis via DXP pathway; isopentenyl diphosphate from 1-deoxy-D-xylulose 5-phosphate: step 2/6. In terms of biological role, catalyzes the formation of 4-diphosphocytidyl-2-C-methyl-D-erythritol from CTP and 2-C-methyl-D-erythritol 4-phosphate (MEP). The polypeptide is 2-C-methyl-D-erythritol 4-phosphate cytidylyltransferase (Escherichia fergusonii (strain ATCC 35469 / DSM 13698 / CCUG 18766 / IAM 14443 / JCM 21226 / LMG 7866 / NBRC 102419 / NCTC 12128 / CDC 0568-73)).